A 612-amino-acid polypeptide reads, in one-letter code: Alpha-1,3-galactosidase B (612 aa).

The signal sequence occupies residues 1 to 19; the sequence is MKWYLWGAVVLLYSLFGSA. Residue C20 is the site of N-palmitoyl cysteine attachment. Residue C20 is the site of S-diacylglycerol cysteine attachment. PbH1 repeat units follow at residues 431-453, 454-476, and 487-536; these read TPTVLFSDNLIRNNRARGSLFST, PRQTVVENNVFDHTSGTAILLCG, and CRNV…VIDA.

The protein belongs to the glycosyl hydrolase 110 family. B subfamily.

It localises to the cell membrane. The catalysed reaction is Hydrolysis of terminal, non-reducing branched (1-&gt;3)-alpha-D-galactosidic residues, producing free D-galactose.. It carries out the reaction Hydrolysis of terminal, non-reducing linear (1-&gt;3)-alpha-D-galactosidic residues, producing free D-galactose.. It catalyses the reaction Hydrolysis of terminal, non-reducing alpha-D-galactose residues in alpha-D-galactosides, including galactose oligosaccharides, galactomannans and galactolipids.. Functionally, alpha-galactosidase. Removes both branched alpha-1,3-linked galactose residues of blood group B antigens and linear alpha-1,3-linked galactose structures. The chain is Alpha-1,3-galactosidase B (glaB) from Parabacteroides distasonis (strain ATCC 8503 / DSM 20701 / CIP 104284 / JCM 5825 / NCTC 11152).